The primary structure comprises 121 residues: Holin-like protein CidA (121 aa).

The next 3 helical transmembrane spans lie at 27-47, 58-78, and 89-109; these read VHLP…SLKF, GADF…VAVI, and IDLI…TGIL.

The protein belongs to the CidA/LrgA family. CidA subfamily.

It localises to the cell membrane. Increases the activity of extracellular murein hydrolases possibly by mediating their export via hole formation. Inhibited by the antiholin-like proteins LrgAB. In an unstressed cell, the LrgAB products probably inhibit the function of the CidA protein. When a cell is stressed by the addition of antibiotics or by other factors in the environment, CidA possibly oligomerizes within the bacterial cell membrane, creating lesions that disrupt the proton motive force, which in turn results in loss of cell viability. These lesions are also hypothesized to regulate the subsequent cell lysis by either allowing the murein hydrolases access to the cell wall substrate and/or regulating their activity by a possible change in the cell wall pH that results from loss of membrane potential. This chain is Holin-like protein CidA, found in Bacillus cytotoxicus (strain DSM 22905 / CIP 110041 / 391-98 / NVH 391-98).